A 553-amino-acid chain; its full sequence is Rhodopsin kinase GRK7 (553 aa).

Serine 36 is subject to Phosphoserine; by PKA. One can recognise an RGS domain in the interval 56 to 176; it reads FNSLCEQQPI…LVSPFYDKFL (121 aa). The Protein kinase domain occupies 191–454; the sequence is FEEFRVLGKG…SDDPRKHHFF (264 aa). Residues 197–205 and lysine 220 each bind ATP; that span reads LGKGGFGEV. Aspartate 316 acts as the Proton acceptor in catalysis. The AGC-kinase C-terminal domain occupies 455-520; it reads KTINFPRLEA…GAVPIAWQEE (66 aa). Cysteine 550 is subject to Cysteine methyl ester. A lipid anchor (S-geranylgeranyl cysteine) is attached at cysteine 550. A propeptide spans 551 to 553 (removed in mature form); that stretch reads LLL.

This sequence belongs to the protein kinase superfamily. AGC Ser/Thr protein kinase family. GPRK subfamily. In terms of assembly, interacts (when prenylated) with PDE6D; this promotes release from membranes. In terms of processing, autophosphorylated in vitro at Ser-490. Phosphorylation at Ser-36 is regulated by light and activated by cAMP.

The protein localises to the membrane. The catalysed reaction is L-threonyl-[rhodopsin] + ATP = O-phospho-L-threonyl-[rhodopsin] + ADP + H(+). It catalyses the reaction L-seryl-[rhodopsin] + ATP = O-phospho-L-seryl-[rhodopsin] + ADP + H(+). With respect to regulation, inhibited by phosphorylation of Ser-36. In terms of biological role, retina-specific kinase involved in the shutoff of the photoresponse and adaptation to changing light conditions via cone opsin phosphorylation, including rhodopsin (RHO). The chain is Rhodopsin kinase GRK7 (GRK7) from Sus scrofa (Pig).